A 469-amino-acid chain; its full sequence is 3-isopropylmalate dehydratase large subunit (469 aa).

Residues C347, C410, and C413 each coordinate [4Fe-4S] cluster.

It belongs to the aconitase/IPM isomerase family. LeuC type 1 subfamily. As to quaternary structure, heterodimer of LeuC and LeuD. Requires [4Fe-4S] cluster as cofactor.

It catalyses the reaction (2R,3S)-3-isopropylmalate = (2S)-2-isopropylmalate. It participates in amino-acid biosynthesis; L-leucine biosynthesis; L-leucine from 3-methyl-2-oxobutanoate: step 2/4. In terms of biological role, catalyzes the isomerization between 2-isopropylmalate and 3-isopropylmalate, via the formation of 2-isopropylmaleate. The polypeptide is 3-isopropylmalate dehydratase large subunit (Burkholderia vietnamiensis (strain G4 / LMG 22486) (Burkholderia cepacia (strain R1808))).